The chain runs to 118 residues: MNNYETVFILTPVLSDAQMKEAVEKFTNLLKAQGAEIVNEENWGLRKLAYPIDKKTTGFYQLVEFKADPSVIATLELNFRRDERVIRFLTFRQDKYAAEYAAKRRNLKSSKETVKENN.

The protein belongs to the bacterial ribosomal protein bS6 family.

In terms of biological role, binds together with bS18 to 16S ribosomal RNA. This is Small ribosomal subunit protein bS6 from Parabacteroides distasonis (strain ATCC 8503 / DSM 20701 / CIP 104284 / JCM 5825 / NCTC 11152).